A 792-amino-acid polypeptide reads, in one-letter code: Carboxysome assembly protein CsoS2 (792 aa).

Residues 1-15 (MAKQSSRELALERRK) show a composition bias toward basic and acidic residues. The tract at residues 1–235 (MAKQSSRELA…EISQRVRELR (235 aa)) is N-terminal domain. Disordered stretches follow at residues 1 to 259 (MAKQ…RNGS), 280 to 299 (QVVTGTQANRSSKTTGNEAS), and 338 to 359 (HGNRVTGNEVGRSEKVTGDEPG). The N-repeat 1 repeat unit spans residues 7–22 (RELALERRKALSNSGK). Composition is skewed to polar residues over residues 17 to 36 (LSNSGKKSTTLNGSSPNRIR) and 69 to 82 (DTSFVASRESSGAS). One copy of the N-repeat 2 repeat lies at 94–109 (RELVLARRDELSRRGQ). Composition is skewed to basic and acidic residues over residues 97 to 106 (VLARRDELSR) and 113 to 126 (KSKDRTRAEVEKIS). Residues 161-175 (DTVSRLSSRNSTSRP) are compositionally biased toward polar residues. N-repeat repeat units lie at residues 187–202 (RALVLARREAQSKHGK) and 225–240 (REISQRVRELRSKSGA). The segment covering 218-236 (GDPDLSSREISQRVRELRS) has biased composition (basic and acidic residues). Residues 240–615 (ATGKKRSGAC…VQACGSDAPA (376 aa)) form a middle region region. M-repeat repeat units lie at residues 270–319 (KVGL…DTFC), 330–379 (KVAV…NQYC), 388–427 (KVGQSVTEDGRKVSGVMVGRSEKVTGDEAGSNRQLTGDQY), 441–490 (KVGS…NTFC), 500–549 (KVGL…SGWC), and 560–609 (RTPK…VQAC). Disordered regions lie at residues 608-662 (ACGS…GSQI) and 687-792 (HFKS…GARG). Residues 616–792 (GSNDHQGSSE…LITVSGGARG (177 aa)) form a C-terminal domain region. Composition is skewed to polar residues over residues 618 to 636 (NDHQGSSESSPWTHFSVQS) and 651 to 662 (VTGTSYEQGSQI). C-repeat repeat units follow at residues 633-678 (SVQS…GTEQ) and 703-738 (TRPESRVTGEGQSAGLNITGDDWDRSERVTGTEGAS). Residues 763–792 (EVSQPMSRVTGSSGNTDQGSLITVSGGARG) form a C-terminal peptide (CTP) region. Over residues 764–785 (VSQPMSRVTGSSGNTDQGSLIT) the composition is skewed to polar residues.

It belongs to the CsoS2 family. In terms of assembly, probably interacts with the carboxysome major shell protein CsoS1 via the N-terminal domain; this complex probably also interacts with RuBisCO. Post-translationally, has been suggested to undergo ribosomal frameshifting, as does its ortholog in H.neapolitanus. The exact position of the putative frameshift is not given, but it would probably occur in the sixth M-repeat and remove the C-terminus.

Its subcellular location is the carboxysome. In terms of biological role, required for alpha-carboxysome (Cb) assembly, mediates interaction between RuBisCO and the Cb shell. The protein is probably intrinsically disordered. The C-terminal repeats act as the encapsulation signal to target proteins to the Cb; they are necessary and sufficient to target both CsoS2 and foreign proteins to the Cb. The N-terminal repeats of this protein bind simultaneously to both subunits of RuBisCO. Probably also interacts with the major shell proteins (CsoS1); that interaction would increase the local concentration of CsoS2 so that it can condense RuBisCO and full carboxysomes can be formed. The sequence is that of Carboxysome assembly protein CsoS2 from Prochlorococcus marinus (strain MIT 9313).